Here is a 167-residue protein sequence, read N- to C-terminus: Crossover junction endodeoxyribonuclease RuvC (167 aa).

Catalysis depends on residues Asp11, Glu71, and Asp143. Residues Asp11, Glu71, and Asp143 each coordinate Mg(2+).

This sequence belongs to the RuvC family. As to quaternary structure, homodimer which binds Holliday junction (HJ) DNA. The HJ becomes 2-fold symmetrical on binding to RuvC with unstacked arms; it has a different conformation from HJ DNA in complex with RuvA. In the full resolvosome a probable DNA-RuvA(4)-RuvB(12)-RuvC(2) complex forms which resolves the HJ. Mg(2+) is required as a cofactor.

The protein localises to the cytoplasm. It catalyses the reaction Endonucleolytic cleavage at a junction such as a reciprocal single-stranded crossover between two homologous DNA duplexes (Holliday junction).. Its function is as follows. The RuvA-RuvB-RuvC complex processes Holliday junction (HJ) DNA during genetic recombination and DNA repair. Endonuclease that resolves HJ intermediates. Cleaves cruciform DNA by making single-stranded nicks across the HJ at symmetrical positions within the homologous arms, yielding a 5'-phosphate and a 3'-hydroxyl group; requires a central core of homology in the junction. The consensus cleavage sequence is 5'-(A/T)TT(C/G)-3'. Cleavage occurs on the 3'-side of the TT dinucleotide at the point of strand exchange. HJ branch migration catalyzed by RuvA-RuvB allows RuvC to scan DNA until it finds its consensus sequence, where it cleaves and resolves the cruciform DNA. This is Crossover junction endodeoxyribonuclease RuvC from Acidiphilium cryptum (strain JF-5).